A 597-amino-acid chain; its full sequence is UvrABC system protein C (597 aa).

In terms of domain architecture, GIY-YIG spans 15–93 (NSPGVYQYFD…IKKHQPRFNV (79 aa)). Residues 207–242 (KDSLQRFRNQMKQHSEKMEFEDAQRIKNKIDVLENY) enclose the UVR domain.

It belongs to the UvrC family. In terms of assembly, interacts with UvrB in an incision complex.

The protein resides in the cytoplasm. The UvrABC repair system catalyzes the recognition and processing of DNA lesions. UvrC both incises the 5' and 3' sides of the lesion. The N-terminal half is responsible for the 3' incision and the C-terminal half is responsible for the 5' incision. The chain is UvrABC system protein C from Christiangramia forsetii (strain DSM 17595 / CGMCC 1.15422 / KT0803) (Gramella forsetii).